Here is a 363-residue protein sequence, read N- to C-terminus: Pyruvate dehydrogenase E1 component subunit alpha, mitochondrial (363 aa).

Residues Arg-1–Asn-2 constitute a mitochondrion transit peptide. Lys-36 carries the N6-acetyllysine; alternate modification. Lys-36 carries the post-translational modification N6-succinyllysine; alternate. Positions 65, 91, 92, 130, 138, 140, 169, 170, 171, 198, and 200 each coordinate pyruvate. Tyr-91 and Arg-92 together coordinate thiamine diphosphate. 6 residues coordinate thiamine diphosphate: Gly-138, Val-140, Asp-169, Gly-170, Ala-171, and Asn-198. A Mg(2+)-binding site is contributed by Asp-169. Positions 198 and 200 each coordinate Mg(2+). Ser-205 carries the phosphoserine; by PDK1 modification. Lys-217 bears the N6-acetyllysine; alternate mark. Lys-217 is modified (N6-succinyllysine; alternate). Position 240 is an N6-acetyllysine (Lys-240). Lys-250 is modified (N6-succinyllysine). His-265 provides a ligand contact to thiamine diphosphate. A Phosphoserine; by PDK1, PDK2, PDK3 and PDK4 modification is found at Ser-266. At Ser-268 the chain carries Phosphoserine. Ser-273 carries the post-translational modification Phosphoserine; by PDK1, PDK2, PDK3 and PDK4. The residue at position 274 (Tyr-274) is a Phosphotyrosine. Position 286 is an N6-acetyllysine; alternate (Lys-286). Lys-286 bears the N6-succinyllysine; alternate mark. An N6-acetyllysine mark is found at Lys-294 and Lys-309. Lys-358 carries the N6-succinyllysine modification.

In terms of assembly, heterotetramer of two PDHA1 and two PDHB subunits. The heterotetramer interacts with DLAT, and is part of the multimeric pyruvate dehydrogenase complex that contains multiple copies of pyruvate dehydrogenase (E1), dihydrolipoamide acetyltransferase (DLAT, E2) and lipoamide dehydrogenase (DLD, E3). These subunits are bound to an inner core composed of about 48 DLAT and 12 PDHX molecules. Requires thiamine diphosphate as cofactor. It depends on Mg(2+) as a cofactor. Phosphorylation at Ser-205, Ser-266 and Ser-273 by PDK family kinases inactivates the enzyme; for this phosphorylation at a single site is sufficient. Phosphorylation at Ser-266 interferes with access to active site, and thereby inactivates the enzyme. Dephosphorylation at all three sites, i.e. at Ser-205, Ser-266 and Ser-273, is required for reactivation. In terms of processing, acetylation alters the phosphorylation pattern. Deacetylated by SIRT3.

The protein resides in the mitochondrion matrix. The catalysed reaction is N(6)-[(R)-lipoyl]-L-lysyl-[protein] + pyruvate + H(+) = N(6)-[(R)-S(8)-acetyldihydrolipoyl]-L-lysyl-[protein] + CO2. Its activity is regulated as follows. Pyruvate dehydrogenase activity is inhibited by phosphorylation of PDHA1; it is reactivated by dephosphorylation. The pyruvate dehydrogenase complex catalyzes the overall conversion of pyruvate to acetyl-CoA and CO(2), and thereby links the glycolytic pathway to the tricarboxylic cycle. The protein is Pyruvate dehydrogenase E1 component subunit alpha, mitochondrial (PDHA) of Sminthopsis macroura (Stripe-faced dunnart).